Consider the following 350-residue polypeptide: Anthranilate phosphoribosyltransferase (350 aa).

Residues glycine 82, 85–86 (GD), serine 90, 92–95 (NVST), 110–118 (KHGNRAVTG), and glycine 122 contribute to the 5-phospho-alpha-D-ribose 1-diphosphate site. Residue glycine 82 participates in anthranilate binding. Serine 94 provides a ligand contact to Mg(2+). Asparagine 113 contributes to the anthranilate binding site. Arginine 168 is a binding site for anthranilate. Aspartate 232 and glutamate 233 together coordinate Mg(2+).

This sequence belongs to the anthranilate phosphoribosyltransferase family. In terms of assembly, homodimer. Mg(2+) serves as cofactor.

The enzyme catalyses N-(5-phospho-beta-D-ribosyl)anthranilate + diphosphate = 5-phospho-alpha-D-ribose 1-diphosphate + anthranilate. It functions in the pathway amino-acid biosynthesis; L-tryptophan biosynthesis; L-tryptophan from chorismate: step 2/5. Catalyzes the transfer of the phosphoribosyl group of 5-phosphorylribose-1-pyrophosphate (PRPP) to anthranilate to yield N-(5'-phosphoribosyl)-anthranilate (PRA). The protein is Anthranilate phosphoribosyltransferase of Methanothermobacter marburgensis (strain ATCC BAA-927 / DSM 2133 / JCM 14651 / NBRC 100331 / OCM 82 / Marburg) (Methanobacterium thermoautotrophicum).